A 396-amino-acid chain; its full sequence is Elongation factor Tu (396 aa).

The region spanning 10-206 (KPHVNVGTIG…ALDSFIPEPT (197 aa)) is the tr-type G domain. Residues 19-26 (GHVDHGKT) form a G1 region. Position 19-26 (19-26 (GHVDHGKT)) interacts with GTP. Thr26 provides a ligand contact to Mg(2+). Residues 60–64 (GITIS) form a G2 region. The G3 stretch occupies residues 81–84 (DCPG). GTP-binding positions include 81-85 (DCPGH) and 136-139 (NKAD). The segment at 136–139 (NKAD) is G4. The interval 174 to 176 (SAR) is G5.

Belongs to the TRAFAC class translation factor GTPase superfamily. Classic translation factor GTPase family. EF-Tu/EF-1A subfamily. In terms of assembly, monomer.

Its subcellular location is the cytoplasm. The catalysed reaction is GTP + H2O = GDP + phosphate + H(+). Its function is as follows. GTP hydrolase that promotes the GTP-dependent binding of aminoacyl-tRNA to the A-site of ribosomes during protein biosynthesis. The sequence is that of Elongation factor Tu from Xanthomonas euvesicatoria pv. vesicatoria (strain 85-10) (Xanthomonas campestris pv. vesicatoria).